A 261-amino-acid polypeptide reads, in one-letter code: uncharacterized protein (261 aa).

This sequence belongs to the BtpA family.

This is an uncharacterized protein from Thermococcus kodakarensis (strain ATCC BAA-918 / JCM 12380 / KOD1) (Pyrococcus kodakaraensis (strain KOD1)).